We begin with the raw amino-acid sequence, 107 residues long: Ig kappa chain V-VI region NQ6-8.3.1 (107 aa).

The framework-1 stretch occupies residues 1 to 23; sequence QIVLTQSPAIMSASPGQKVTMTC. Cys-23 and Cys-87 are joined by a disulfide. The interval 24–33 is complementarity-determining-1; the sequence is SASSSVSYMH. The framework-2 stretch occupies residues 34 to 48; that stretch reads WYQQKSGTSPKRWIY. Residues 49 to 55 are complementarity-determining-2; the sequence is DTSKLAS. Positions 56–87 are framework-3; it reads GXPARFSGSGSATSYSLTITSMQAEDAATYYC. Residues 88–96 form a complementarity-determining-3 region; sequence QQWSSNPLT. Positions 97–106 are framework-4; the sequence is FGAGTKLELK.

Anti-2-phenyl oxazolone (PHOX) Antibody. The sequence is that of Ig kappa chain V-VI region NQ6-8.3.1 from Mus musculus (Mouse).